A 421-amino-acid chain; its full sequence is Serine--tRNA ligase (421 aa).

232-234 (TAE) is an L-serine binding site. 262–264 (RSE) contacts ATP. Glutamate 285 is an L-serine binding site. 349-352 (EVSS) is an ATP binding site. Serine 384 contacts L-serine.

It belongs to the class-II aminoacyl-tRNA synthetase family. Type-1 seryl-tRNA synthetase subfamily. In terms of assembly, homodimer. The tRNA molecule binds across the dimer.

The protein localises to the cytoplasm. It catalyses the reaction tRNA(Ser) + L-serine + ATP = L-seryl-tRNA(Ser) + AMP + diphosphate + H(+). It carries out the reaction tRNA(Sec) + L-serine + ATP = L-seryl-tRNA(Sec) + AMP + diphosphate + H(+). It participates in aminoacyl-tRNA biosynthesis; selenocysteinyl-tRNA(Sec) biosynthesis; L-seryl-tRNA(Sec) from L-serine and tRNA(Sec): step 1/1. Functionally, catalyzes the attachment of serine to tRNA(Ser). Is also able to aminoacylate tRNA(Sec) with serine, to form the misacylated tRNA L-seryl-tRNA(Sec), which will be further converted into selenocysteinyl-tRNA(Sec). This Mycoplasma mobile (strain ATCC 43663 / 163K / NCTC 11711) (Mesomycoplasma mobile) protein is Serine--tRNA ligase.